We begin with the raw amino-acid sequence, 263 residues long: Hydroxyethylthiazole kinase 2 (263 aa).

Substrate is bound at residue methionine 42. Residues lysine 118 and threonine 164 each coordinate ATP. A substrate-binding site is contributed by glycine 191.

This sequence belongs to the Thz kinase family. The cofactor is Mg(2+).

The catalysed reaction is 5-(2-hydroxyethyl)-4-methylthiazole + ATP = 4-methyl-5-(2-phosphooxyethyl)-thiazole + ADP + H(+). It functions in the pathway cofactor biosynthesis; thiamine diphosphate biosynthesis; 4-methyl-5-(2-phosphoethyl)-thiazole from 5-(2-hydroxyethyl)-4-methylthiazole: step 1/1. Functionally, catalyzes the phosphorylation of the hydroxyl group of 4-methyl-5-beta-hydroxyethylthiazole (THZ). This Clostridium botulinum (strain Loch Maree / Type A3) protein is Hydroxyethylthiazole kinase 2.